The chain runs to 642 residues: Kelch-like protein 17 (642 aa).

Residues 1-53 (MQPRSERPAGRTQSPEHGSPGPGPEAPPPPPPQPPAPEAERTRPRQARPAAPM) are disordered. The span at 21 to 37 (GPGPEAPPPPPPQPPAP) shows a compositional bias: pro residues. In terms of domain architecture, BTB spans 92–159 (CDIVLHVAAK…AYTAEIVVGE (68 aa)). Residues 194 to 296 (CLGIRGFADA…SRDFLLGHVD (103 aa)) enclose the BACK domain. The interaction with F-actin stretch occupies residues 289–641 (DFLLGHVDAE…SPTLSVSSTS (353 aa)). 6 Kelch repeats span residues 343-389 (VLFA…AVGN), 390-436 (RLYA…ALHG), 438-483 (LYSA…TLDG), 484-530 (NLYA…VLEG), 532-577 (LYVA…AMDG), and 578-624 (WLYA…VLEL). Positions 640 to 642 (TSL) are interaction with PDZK1.

In terms of assembly, interacts with F-actin; the interaction disrupts the F-actin structures and leads to marked changes of neuronal morphology. Component of a complex, composed of PDZK1, SYNGAP1, KLHL17 and NMDA receptors. Interacts directly with PDZK1 (via PDZ1 domain); the interaction is important for integrity of actin cytoskeleton structures in neurons. Interacts with DLG4 and SYNGAP1. Interacts (via kelch repeats) with GRIK2 (via C-terminus); the interaction targets GRIK2 for degradation via ubiquitin-proteasome pathway. Interacts with GRIK1. Interacts with (via BTB domain) CUL3; the interaction regulates surface GRIK2 expression.

The protein resides in the postsynaptic density. It is found in the synapse. It functions in the pathway protein modification; protein ubiquitination. Functionally, substrate-recognition component of some cullin-RING-based BCR (BTB-CUL3-RBX1) E3 ubiquitin-protein ligase complexes. The BCR(KLHL17) complex mediates the ubiquitination and subsequent degradation of GLUR6. May play a role in the actin-based neuronal function. This Homo sapiens (Human) protein is Kelch-like protein 17 (KLHL17).